Here is a 368-residue protein sequence, read N- to C-terminus: Peptide chain release factor 2 (368 aa).

Residue Q250 is modified to N5-methylglutamine.

Belongs to the prokaryotic/mitochondrial release factor family. Post-translationally, methylated by PrmC. Methylation increases the termination efficiency of RF2.

The protein localises to the cytoplasm. Its function is as follows. Peptide chain release factor 2 directs the termination of translation in response to the peptide chain termination codons UGA and UAA. The sequence is that of Peptide chain release factor 2 from Chlamydia trachomatis serovar L2 (strain ATCC VR-902B / DSM 19102 / 434/Bu).